The following is a 380-amino-acid chain: MRKNRELLLVLFLVVFILFYFITARTADDPYYSNHREKFNGAAADDGDESLPFHQLTSVRSDDGYNRTSPFIFIGGVPRSGTTLMRAMLDAHPEVRCGEETRVIPRILNLRSQWKKSEKEWNRLQQAGVTGEVINNAISSFIMEIMVGHGDRAPRLCNKDPFTMKSAVYLKELFPNAKYLLMIRDGRATVNSIISRKVTITGFDLNDFRQCMTKWNAAIQIMVDQCESVGEKNCLKVYYEQLVLHPEAQMRRITEFLDIPWDDKVLHHEQLIGKDISLSNVERSSDQVVKPVNLDALIKWVGTIPEDVVADMDSVAPMLRRLGYDPNANPPNYGKPDELVAKKTEDVHKNGAEWYKKAVQVVNDPGRVDKPIVDNEVSKL.

Residues 1–6 lie on the Cytoplasmic side of the membrane; sequence MRKNRE. A helical; Signal-anchor for type II membrane protein membrane pass occupies residues 7–27; the sequence is LLLVLFLVVFILFYFITARTA. Over 28-380 the chain is Lumenal; it reads DDPYYSNHRE…PIVDNEVSKL (353 aa). An N-linked (GlcNAc...) asparagine glycan is attached at asparagine 66. Residue 79–83 participates in 3'-phosphoadenylyl sulfate binding; sequence RSGTT. Cysteine 97 and cysteine 157 form a disulfide bridge. Catalysis depends on glutamate 100, which acts as the Proton donor/acceptor. Residues 102–106 form an interaction with peptide substrate region; it reads RVIPR. Residues arginine 184, serine 192, and arginine 196 each contribute to the 3'-phosphoadenylyl sulfate site. Cysteine 226 and cysteine 234 are disulfide-bonded. 3'-phosphoadenylyl sulfate contacts are provided by residues tyrosine 239, 284 to 293, and lysine 299; that span reads SSDQVVKPVN.

Belongs to the protein sulfotransferase family.

The protein localises to the golgi apparatus membrane. It carries out the reaction L-tyrosyl-[protein] + 3'-phosphoadenylyl sulfate = O-sulfo-L-tyrosine-[protein] + adenosine 3',5'-bisphosphate + H(+). In terms of biological role, catalyzes the O-sulfation of tyrosine residues within acidic motifs of polypeptides, using 3'-phosphoadenylyl sulfate (PAPS) as cosubstrate. The sequence is that of Protein-tyrosine sulfotransferase A (tpst-1) from Caenorhabditis elegans.